The chain runs to 313 residues: Ribosomal RNA small subunit methyltransferase H (313 aa).

S-adenosyl-L-methionine is bound by residues 33 to 35 (AGH), D53, F82, D103, and Q110.

The protein belongs to the methyltransferase superfamily. RsmH family.

Its subcellular location is the cytoplasm. The enzyme catalyses cytidine(1402) in 16S rRNA + S-adenosyl-L-methionine = N(4)-methylcytidine(1402) in 16S rRNA + S-adenosyl-L-homocysteine + H(+). Functionally, specifically methylates the N4 position of cytidine in position 1402 (C1402) of 16S rRNA. The sequence is that of Ribosomal RNA small subunit methyltransferase H from Ruminiclostridium cellulolyticum (strain ATCC 35319 / DSM 5812 / JCM 6584 / H10) (Clostridium cellulolyticum).